A 486-amino-acid polypeptide reads, in one-letter code: Argininosuccinate lyase (486 aa).

The protein belongs to the lyase 1 family. Argininosuccinate lyase subfamily.

Its subcellular location is the cytoplasm. The catalysed reaction is 2-(N(omega)-L-arginino)succinate = fumarate + L-arginine. The protein operates within amino-acid biosynthesis; L-arginine biosynthesis; L-arginine from L-ornithine and carbamoyl phosphate: step 3/3. The chain is Argininosuccinate lyase from Acidovorax ebreus (strain TPSY) (Diaphorobacter sp. (strain TPSY)).